A 663-amino-acid chain; its full sequence is RING finger protein 145 (663 aa).

The next 14 helical transmembrane spans lie at 53–73 (YLALNMHYVGYILSVVLLTLP), 77–97 (LVQLYLYFVTALLLYAGHQIS), 123–143 (FTTALIGQLVVCTLCSCVMKT), 146–166 (IWLFSAHMLPLLARLCLVPLE), 168–188 (IVIINKFAMIFTGLEVLYFLG), 205–222 (LVQVVEVYGLLALGMSLW), 225–245 (LVVPVLFMVFWLVLFALQIYS), 275–295 (YSLLGLVFTVSFVALGVLTLC), 316–336 (TEGVTLLILAVQTGLIELQVV), 340–360 (FLLSIILFIVVASILQSMLEI), 384–404 (SLCLFLLVFPAYMAYMICQFF), 410–430 (LLIIISSSILTSLQVLGTLFI), 460–480 (LLEFVVALCVVAYGVSETIFG), and 482–502 (WTVMGSMIIFIHSYYNVWLRA). The YLYF motif motif lies at 81–84 (YLYF). Cys-537 is a catalytic residue. The segment at 537–575 (CAICYQDMKSAVITPCSHFFHAGCLKKWLYVQDTCPLCH) adopts an RING-type; atypical zinc-finger fold. The tract at residues 587-663 (LGTEAAPQPP…EGEVCPVESA (77 aa)) is disordered. The span at 619–628 (GTGTQEGSGD) shows a compositional bias: polar residues.

Interacts (via YLYF motif) with INSIG1 and INSIG2.

The protein resides in the endoplasmic reticulum membrane. It carries out the reaction S-ubiquitinyl-[E2 ubiquitin-conjugating enzyme]-L-cysteine + [acceptor protein]-L-lysine = [E2 ubiquitin-conjugating enzyme]-L-cysteine + N(6)-ubiquitinyl-[acceptor protein]-L-lysine.. Its function is as follows. E3 ubiquitin ligase that catalyzes the direct transfer of ubiquitin from E2 ubiquitin-conjugating enzyme to a specific substrate. In response to bacterial infection, negatively regulates the phagocyte oxidative burst by controlling the turnover of the NADPH oxidase complex subunits. Promotes monoubiquitination of CYBA and 'Lys-48'-linked polyubiquitination and degradation of CYBB NADPH oxidase catalytic subunits, both essential for the generation of antimicrobial reactive oxygen species. Involved in the maintenance of cholesterol homeostasis. In response to high sterol concentrations ubiquitinates HMGCR, a rate-limiting enzyme in cholesterol biosynthesis, and targets it for degradation. The interaction with INSIG1 is required for this function. In addition, triggers ubiquitination of SCAP, likely inhibiting its transport to the Golgi apparatus and the subsequent processing/maturation of SREBPF2, ultimately down-regulating cholesterol biosynthesis. The sequence is that of RING finger protein 145 from Mus musculus (Mouse).